Reading from the N-terminus, the 687-residue chain is Putative pentatricopeptide repeat-containing protein At3g15930 (687 aa).

PPR repeat units lie at residues 98 to 132 (DVVV…GVTP), 133 to 168 (DSHT…GLGS), 169 to 199 (NLYV…RCKE), 200 to 234 (DVFS…LVSP), 235 to 269 (TSVT…KTEP), 270 to 304 (SLRL…DVIS), 305 to 331 (WTSI…MPVR), 332 to 366 (DRIS…GMIP), 367 to 401 (DEFT…KIKN), 402 to 432 (DVVV…MDQR), 433 to 467 (DKFT…SIQP), 468 to 498 (DDIT…MRSD), and 504 to 534 (SLVH…MPMN). Residues 539 to 614 (VWGALLGASR…TPGFSLIEVN (76 aa)) form a type E motif region. The tract at residues 615–645 (GFAHEFVAGDKSHLQSEEIYMKLEELAQEST) is type E(+) motif.

Belongs to the PPR family. PCMP-E subfamily.

This chain is Putative pentatricopeptide repeat-containing protein At3g15930 (PCMP-E51), found in Arabidopsis thaliana (Mouse-ear cress).